Reading from the N-terminus, the 156-residue chain is Small ribosomal subunit protein uS7 (156 aa).

It belongs to the universal ribosomal protein uS7 family. Part of the 30S ribosomal subunit. Contacts proteins S9 and S11.

In terms of biological role, one of the primary rRNA binding proteins, it binds directly to 16S rRNA where it nucleates assembly of the head domain of the 30S subunit. Is located at the subunit interface close to the decoding center, probably blocks exit of the E-site tRNA. The protein is Small ribosomal subunit protein uS7 of Metamycoplasma arthritidis (strain 158L3-1) (Mycoplasma arthritidis).